The chain runs to 721 residues: Fatty acid oxidation complex subunit alpha (721 aa).

The segment at Met1–Ala190 is enoyl-CoA hydratase/isomerase. Asp297 provides a ligand contact to substrate. Positions Lys312–Glu721 are 3-hydroxyacyl-CoA dehydrogenase. NAD(+) contacts are provided by residues Met325, Asp344, Val401–Glu403, Lys408, and Ser430. Residue His451 is the For 3-hydroxyacyl-CoA dehydrogenase activity of the active site. An NAD(+)-binding site is contributed by Asn454. Residues Asn501 and Tyr660 each contribute to the substrate site.

The protein in the N-terminal section; belongs to the enoyl-CoA hydratase/isomerase family. This sequence in the C-terminal section; belongs to the 3-hydroxyacyl-CoA dehydrogenase family. Heterotetramer of two alpha chains (FadB) and two beta chains (FadA).

The catalysed reaction is a (3S)-3-hydroxyacyl-CoA + NAD(+) = a 3-oxoacyl-CoA + NADH + H(+). The enzyme catalyses a (3S)-3-hydroxyacyl-CoA = a (2E)-enoyl-CoA + H2O. It carries out the reaction a 4-saturated-(3S)-3-hydroxyacyl-CoA = a (3E)-enoyl-CoA + H2O. It catalyses the reaction (3S)-3-hydroxybutanoyl-CoA = (3R)-3-hydroxybutanoyl-CoA. The catalysed reaction is a (3Z)-enoyl-CoA = a 4-saturated (2E)-enoyl-CoA. The enzyme catalyses a (3E)-enoyl-CoA = a 4-saturated (2E)-enoyl-CoA. It functions in the pathway lipid metabolism; fatty acid beta-oxidation. In terms of biological role, involved in the aerobic and anaerobic degradation of long-chain fatty acids via beta-oxidation cycle. Catalyzes the formation of 3-oxoacyl-CoA from enoyl-CoA via L-3-hydroxyacyl-CoA. It can also use D-3-hydroxyacyl-CoA and cis-3-enoyl-CoA as substrate. The sequence is that of Fatty acid oxidation complex subunit alpha from Pseudomonas syringae pv. syringae (strain B728a).